The primary structure comprises 246 residues: 1-(5-phosphoribosyl)-5-[(5-phosphoribosylamino)methylideneamino] imidazole-4-carboxamide isomerase (246 aa).

Asp8 functions as the Proton acceptor in the catalytic mechanism. The active-site Proton donor is Asp131.

This sequence belongs to the HisA/HisF family.

Its subcellular location is the cytoplasm. The enzyme catalyses 1-(5-phospho-beta-D-ribosyl)-5-[(5-phospho-beta-D-ribosylamino)methylideneamino]imidazole-4-carboxamide = 5-[(5-phospho-1-deoxy-D-ribulos-1-ylimino)methylamino]-1-(5-phospho-beta-D-ribosyl)imidazole-4-carboxamide. It functions in the pathway amino-acid biosynthesis; L-histidine biosynthesis; L-histidine from 5-phospho-alpha-D-ribose 1-diphosphate: step 4/9. In Polaromonas sp. (strain JS666 / ATCC BAA-500), this protein is 1-(5-phosphoribosyl)-5-[(5-phosphoribosylamino)methylideneamino] imidazole-4-carboxamide isomerase.